A 288-amino-acid chain; its full sequence is Acetyl-coenzyme A carboxylase carboxyl transferase subunit beta (288 aa).

Positions 34 to 288 constitute a CoA carboxyltransferase N-terminal domain; it reads LFAKCPACKH…HLVAFHGGVS (255 aa). 4 residues coordinate Zn(2+): cysteine 38, cysteine 41, cysteine 56, and cysteine 59. A C4-type zinc finger spans residues 38–59; sequence CPACKHMIYQKDLGPAKICPTC.

The protein belongs to the AccD/PCCB family. As to quaternary structure, acetyl-CoA carboxylase is a heterohexamer composed of biotin carboxyl carrier protein (AccB), biotin carboxylase (AccC) and two subunits each of ACCase subunit alpha (AccA) and ACCase subunit beta (AccD). Zn(2+) serves as cofactor.

Its subcellular location is the cytoplasm. The enzyme catalyses N(6)-carboxybiotinyl-L-lysyl-[protein] + acetyl-CoA = N(6)-biotinyl-L-lysyl-[protein] + malonyl-CoA. It functions in the pathway lipid metabolism; malonyl-CoA biosynthesis; malonyl-CoA from acetyl-CoA: step 1/1. In terms of biological role, component of the acetyl coenzyme A carboxylase (ACC) complex. Biotin carboxylase (BC) catalyzes the carboxylation of biotin on its carrier protein (BCCP) and then the CO(2) group is transferred by the transcarboxylase to acetyl-CoA to form malonyl-CoA. This is Acetyl-coenzyme A carboxylase carboxyl transferase subunit beta from Streptococcus equi subsp. zooepidemicus (strain MGCS10565).